The sequence spans 394 residues: A-type flagellin (394 aa).

Belongs to the bacterial flagellin family. Phosphorylated on tyrosine residue(s). Post-translationally, flagellin from strain 5939 but not from strain 170018 is glycosylated.

Its subcellular location is the secreted. It is found in the bacterial flagellum. Flagellin is the subunit protein which polymerizes to form the filaments of bacterial flagella. This Pseudomonas aeruginosa protein is A-type flagellin (fliC).